The following is a 432-amino-acid chain: Glutamate-1-semialdehyde 2,1-aminomutase (432 aa).

At lysine 269 the chain carries N6-(pyridoxal phosphate)lysine.

The protein belongs to the class-III pyridoxal-phosphate-dependent aminotransferase family. HemL subfamily. Homodimer. It depends on pyridoxal 5'-phosphate as a cofactor.

The protein localises to the cytoplasm. It catalyses the reaction (S)-4-amino-5-oxopentanoate = 5-aminolevulinate. It functions in the pathway porphyrin-containing compound metabolism; protoporphyrin-IX biosynthesis; 5-aminolevulinate from L-glutamyl-tRNA(Glu): step 2/2. Its pathway is porphyrin-containing compound metabolism; chlorophyll biosynthesis. The sequence is that of Glutamate-1-semialdehyde 2,1-aminomutase from Chloroherpeton thalassium (strain ATCC 35110 / GB-78).